The primary structure comprises 104 residues: Hydrogen cyanide synthase subunit HcnA (104 aa).

The 2Fe-2S ferredoxin-type domain occupies 16–97 (ADMTIHLNGQ…GMRVETESNR (82 aa)). [2Fe-2S] cluster is bound by residues cysteine 60, cysteine 65, cysteine 68, and cysteine 81.

In terms of assembly, heterotrimer of HcnA, HcnB and HcnC.

The protein resides in the cell membrane. The enzyme catalyses glycine + 2 A = hydrogen cyanide + 2 AH2 + CO2. Oxygen is necessary for cyanogenesis. Activated by succinate, glycine methyl ester, glucose and D,L-methionine in addition to glycine. Phenazine methosulfate, methylene blue, 2,6-dichlorophenolindophenol (DCIP) and ferricyanide can replace oxygen for the reaction. Inhibited by pyrrolnitrin and acriflavine at 1 mM concentration. In terms of biological role, a three-component membrane-bound flavoenzyme that catalyzes the formation of hydrogen cyanide, a secondary metabolite, by transfer of electrons to a cyanide-resistant branch of the aerobic respiratory chain. The protein is Hydrogen cyanide synthase subunit HcnA of Pseudomonas aeruginosa (strain ATCC 15692 / DSM 22644 / CIP 104116 / JCM 14847 / LMG 12228 / 1C / PRS 101 / PAO1).